The sequence spans 336 residues: D-alanine--D-alanine ligase (336 aa).

Residues 124–330 enclose the ATP-grasp domain; the sequence is KMWFSALGIP…FTQYLSLVIN (207 aa). 154–209 serves as a coordination point for ATP; the sequence is ALEKWGSIFVKAASQGSSVGCYKVDEASKVLGVLKDAFGYAPYVIVEKTIKARELE. Mg(2+) contacts are provided by Asp-284, Glu-297, and Asn-299.

It belongs to the D-alanine--D-alanine ligase family. Mg(2+) is required as a cofactor. Mn(2+) serves as cofactor.

The protein localises to the cytoplasm. The enzyme catalyses 2 D-alanine + ATP = D-alanyl-D-alanine + ADP + phosphate + H(+). It functions in the pathway cell wall biogenesis; peptidoglycan biosynthesis. Functionally, cell wall formation. The polypeptide is D-alanine--D-alanine ligase (Shewanella oneidensis (strain ATCC 700550 / JCM 31522 / CIP 106686 / LMG 19005 / NCIMB 14063 / MR-1)).